The chain runs to 126 residues: Fluoride-specific ion channel FluC (126 aa).

Helical transmembrane passes span 2-22, 37-57, 65-85, and 99-119; these read LITV…RYLI, VGVL…VVLA, LSPF…AFSL, and AALY…LGMM. Na(+)-binding residues include Gly75 and Thr78.

This sequence belongs to the fluoride channel Fluc/FEX (TC 1.A.43) family.

It is found in the cell inner membrane. The enzyme catalyses fluoride(in) = fluoride(out). With respect to regulation, na(+) is not transported, but it plays an essential structural role and its presence is essential for fluoride channel function. Functionally, fluoride-specific ion channel. Important for reducing fluoride concentration in the cell, thus reducing its toxicity. The sequence is that of Fluoride-specific ion channel FluC from Ruegeria sp. (strain TM1040) (Silicibacter sp.).